The primary structure comprises 264 residues: Cyclin-P1-1 (264 aa).

Residues 1–25 (MDAAAAAGGEMSRQKATASAPPPPE) form a disordered region.

It belongs to the cyclin family. Cyclin U/P subfamily.

The polypeptide is Cyclin-P1-1 (CYCP1-1) (Oryza sativa subsp. japonica (Rice)).